The chain runs to 365 residues: Alanine racemase (365 aa).

The active-site Proton acceptor; specific for D-alanine is Lys32. At Lys32 the chain carries N6-(pyridoxal phosphate)lysine. Arg128 is a substrate binding site. Tyr257 functions as the Proton acceptor; specific for L-alanine in the catalytic mechanism. Met305 serves as a coordination point for substrate.

Belongs to the alanine racemase family. Pyridoxal 5'-phosphate is required as a cofactor.

It catalyses the reaction L-alanine = D-alanine. It participates in amino-acid biosynthesis; D-alanine biosynthesis; D-alanine from L-alanine: step 1/1. Its function is as follows. Catalyzes the interconversion of L-alanine and D-alanine. May also act on other amino acids. In Francisella tularensis subsp. mediasiatica (strain FSC147), this protein is Alanine racemase (alr).